The primary structure comprises 219 residues: Uracil-DNA glycosylase (219 aa).

Catalysis depends on D59, which acts as the Proton acceptor.

The protein belongs to the uracil-DNA glycosylase (UDG) superfamily. UNG family.

It localises to the cytoplasm. It catalyses the reaction Hydrolyzes single-stranded DNA or mismatched double-stranded DNA and polynucleotides, releasing free uracil.. In terms of biological role, excises uracil residues from the DNA which can arise as a result of misincorporation of dUMP residues by DNA polymerase or due to deamination of cytosine. The polypeptide is Uracil-DNA glycosylase (Macrococcus caseolyticus (strain JCSC5402) (Macrococcoides caseolyticum)).